We begin with the raw amino-acid sequence, 31 residues long: Cyclotide mden-M (31 aa).

The cyclopeptide (Gly-Asn) cross-link spans glycine 1–asparagine 31. 3 disulfides stabilise this stretch: cysteine 5-cysteine 21, cysteine 9-cysteine 23, and cysteine 14-cysteine 28.

This sequence belongs to the cyclotide family. Bracelet subfamily. This is a cyclic peptide.

Probably participates in a plant defense mechanism. The sequence is that of Cyclotide mden-M from Melicytus dentatus (Tree violet).